The primary structure comprises 222 residues: Protein GrpE (222 aa).

2 disordered regions span residues 1–21 and 200–222; these read MNDG…ENGQ and KGGP…PEGA.

It belongs to the GrpE family. As to quaternary structure, homodimer.

Its subcellular location is the cytoplasm. Functionally, participates actively in the response to hyperosmotic and heat shock by preventing the aggregation of stress-denatured proteins, in association with DnaK and GrpE. It is the nucleotide exchange factor for DnaK and may function as a thermosensor. Unfolded proteins bind initially to DnaJ; upon interaction with the DnaJ-bound protein, DnaK hydrolyzes its bound ATP, resulting in the formation of a stable complex. GrpE releases ADP from DnaK; ATP binding to DnaK triggers the release of the substrate protein, thus completing the reaction cycle. Several rounds of ATP-dependent interactions between DnaJ, DnaK and GrpE are required for fully efficient folding. This Chelativorans sp. (strain BNC1) protein is Protein GrpE.